We begin with the raw amino-acid sequence, 467 residues long: Asparagine--tRNA ligase (467 aa).

This sequence belongs to the class-II aminoacyl-tRNA synthetase family. As to quaternary structure, homodimer.

Its subcellular location is the cytoplasm. The enzyme catalyses tRNA(Asn) + L-asparagine + ATP = L-asparaginyl-tRNA(Asn) + AMP + diphosphate + H(+). The chain is Asparagine--tRNA ligase from Haemophilus influenzae (strain PittGG).